A 337-amino-acid polypeptide reads, in one-letter code: GTP 3',8-cyclase (337 aa).

The 226-residue stretch at 17-242 (TFQREYYYLR…RQKDRTDGPA (226 aa)) folds into the Radical SAM core domain. Arg26 lines the GTP pocket. Positions 33 and 37 each coordinate [4Fe-4S] cluster. Position 39 (Tyr39) interacts with S-adenosyl-L-methionine. [4Fe-4S] cluster is bound at residue Cys40. Arg76 is a GTP binding site. S-adenosyl-L-methionine is bound at residue Gly80. Thr107 serves as a coordination point for GTP. Ser131 is a binding site for S-adenosyl-L-methionine. Position 168 (Lys168) interacts with GTP. Residue Met202 participates in S-adenosyl-L-methionine binding. [4Fe-4S] cluster contacts are provided by Cys265 and Cys268. A GTP-binding site is contributed by 270 to 272 (RLR). [4Fe-4S] cluster is bound at residue Cys282.

It belongs to the radical SAM superfamily. MoaA family. In terms of assembly, monomer and homodimer. It depends on [4Fe-4S] cluster as a cofactor.

It catalyses the reaction GTP + AH2 + S-adenosyl-L-methionine = (8S)-3',8-cyclo-7,8-dihydroguanosine 5'-triphosphate + 5'-deoxyadenosine + L-methionine + A + H(+). It functions in the pathway cofactor biosynthesis; molybdopterin biosynthesis. Catalyzes the cyclization of GTP to (8S)-3',8-cyclo-7,8-dihydroguanosine 5'-triphosphate. In Mannheimia succiniciproducens (strain KCTC 0769BP / MBEL55E), this protein is GTP 3',8-cyclase.